The primary structure comprises 300 residues: Cytochrome b (300 aa).

Helical transmembrane passes span 28-48, 72-94, 107-127, 168-187, 223-243, and 279-299; these read YGFL…LLAL, WCFR…LHIL, SWIS…YGYV, FFVF…FGIL, IPNK…LFLL, and IGCQ…YIIL. Heme b contacts are provided by H78 and H92.

It belongs to the cytochrome b family. The main subunits of complex b-c1 are: cytochrome b, cytochrome c1 and the Rieske protein. The cofactor is heme b.

The protein resides in the mitochondrion inner membrane. In terms of biological role, component of the ubiquinol-cytochrome c reductase complex (complex III or cytochrome b-c1 complex) that is part of the mitochondrial respiratory chain. The b-c1 complex mediates electron transfer from ubiquinol to cytochrome c. Contributes to the generation of a proton gradient across the mitochondrial membrane that is then used for ATP synthesis. This is Cytochrome b (MT-CYB) from Plasmodium gallinaceum.